A 108-amino-acid chain; its full sequence is Probable chaperone-like protein YdbL (108 aa).

A signal peptide spans 1-21 (MKKTLLLCAFLVGLVSSNVMA).

Its subcellular location is the periplasm. Its function is as follows. Probably acts as a chaperone-like protein that contributes to, but is not required for, the formation of the YdbH-YnbE intermembrane bridge. Affects the function and the structure of the YdbH-YnbE complex. Overexpression of ydbL causes a negative effect on YdbH-YnbE function. The polypeptide is Probable chaperone-like protein YdbL (ydbL) (Escherichia coli (strain K12)).